We begin with the raw amino-acid sequence, 852 residues long: Disease resistance RPP13-like protein 4 (852 aa).

Residues 17-68 (LEEKGRTVSDYRKQLEDLQSELKYMQSFLKDAERQKRTNETLRTLVADLREL) are a coiled coil. Residues Arg149, Val161, 189-196 (GMGGLGKT), Arg297, and Lys363 contribute to the ADP site. Residues 164 to 410 (EGDKRKIKEW…MSSLQLSYDE (247 aa)) form the NB-ARC domain. LRR repeat units lie at residues 558–581 (CKYL…ILDE), 585–609 (LQHL…MEDL), 633–657 (FKKL…IGSL), 683–706 (LTNL…ELDS), 763–786 (LPML…FWGN), and 798–824 (LSSL…VTAN).

It belongs to the disease resistance NB-LRR family. RPP13 subfamily. In terms of assembly, interacts with ZED1/ZRK5. Component of a stable high-order oligomeric complex made of RKS1 and RPP13L4/ZAR1 which recruits ZED1-related kinases (e.g. uridylylated PBL2 and acetylated ZED1/ZRK5) in the presence of ATP and pathogenic bacteria type III secreted effector (T3SE) proteins (e.g. Pseudomonas syringae HopZ1a and HopF2a and Xanthomonas campestris pv. campestris (Xcc) XopAC/AvrAC) to form a wheel-like pentameric resistosome; this complex triggers immunity toward pathogenic bacteria (e.g. X.campestris and P.syringae), especially in vascular tissues. Interacts with RKS1, ZED1/ZRK5, ZRK3, ZRK6 and ZRK15.

The protein localises to the cell membrane. The protein resides in the nucleus. Exhibits autoinhibition activity. CC-NB-LRR receptor-like protein required for recognition of pathogenic bacteria type III effectors (T3E) such as Pseudomonas syringae HopZ1a and HopF2a and Xanthomonas campestris pv. campestris (Xcc) XopAC/AvrAC; this recognition requires ZED1-related kinases (e.g. PBL2, ZRK3 and ZED1/ZRK5). Confers allele-specific recognition and virulence attenuation of HopZ1a. Immunity mediated by RPP13L4/ZAR1 is independent of several genes required by other resistance protein signaling pathways such as NDR1 and RAR1. Together with ZED1/ZRK5, involved in the regulation of the ambient temperature-sensitive intersection of growth and immune response in the absence of pathogens. In Arabidopsis thaliana (Mouse-ear cress), this protein is Disease resistance RPP13-like protein 4 (RPP13L4).